Here is a 481-residue protein sequence, read N- to C-terminus: MSLLDYTAVELAAKIKAGETTATEAMEAVIAQIEKSEDELNCYVTFDKEKALAAAKKADEDIKAGKLTGPLAGVPFAIKDNMCTEGMLTTCSSKILGNFVPTYTADAVERLQNAGAVIIGKTNMDEFAMGSTTETSAFGATKNPRNPEHVPGGSSGGSAAAVAANECFAALGSDTGGSIRQPASYCGVVGLKPTYGTVSRYGLIAYGSSLDQIGPLCKDVTDCATIMEAIAGKDDKDSTSIGRDDYSFTNALVDDVKGMKIGIPRDYFGEGLDPEVKEAVLNAAKVLESKGAIVEEFDLSLVEYAIPTYYTIAAAEASSNLERFDGVKYGYRTKEYEGLHNMYKKTRSEGFGPEVKRRIMLGSFVLSSGYYDAYYLKALRVKALIKKAFDEAFAKYDVILGPVAPTTAPKLGSSLSDPIKMYLGDIYTISVNLAGLPGLSVPCGKDKNGLPIGLQLIGDCFKENNIIRAGYAYEQARGRFE.

Residues Lys79 and Ser154 each act as charge relay system in the active site. Residues 136 to 157 (SAFGATKNPRNPEHVPGGSSGG) form a disordered region. Ser178 serves as the catalytic Acyl-ester intermediate.

This sequence belongs to the amidase family. GatA subfamily. As to quaternary structure, heterotrimer of A, B and C subunits.

The enzyme catalyses L-glutamyl-tRNA(Gln) + L-glutamine + ATP + H2O = L-glutaminyl-tRNA(Gln) + L-glutamate + ADP + phosphate + H(+). Functionally, allows the formation of correctly charged Gln-tRNA(Gln) through the transamidation of misacylated Glu-tRNA(Gln) in organisms which lack glutaminyl-tRNA synthetase. The reaction takes place in the presence of glutamine and ATP through an activated gamma-phospho-Glu-tRNA(Gln). This chain is Glutamyl-tRNA(Gln) amidotransferase subunit A, found in Lachnospira eligens (strain ATCC 27750 / DSM 3376 / VPI C15-48 / C15-B4) (Eubacterium eligens).